A 147-amino-acid chain; its full sequence is Leghemoglobin 8 (147 aa).

One can recognise a Globin domain in the interval 2–147 (GFTEKQESLV…LAASIKKSMS (146 aa)). Y25 and Y30 each carry nitrated tyrosine. Residue S45 participates in heme b binding. The residue at position 45 (S45) is a Phosphoserine. H62 lines the O2 pocket. Heme b contacts are provided by K65, H94, and K97. At Y135 the chain carries Nitrated tyrosine.

This sequence belongs to the plant globin family. Monomer. Interacts with CAS31 in the cytoplasm; this interaction leads to its protection from denaturation under thermal and drought stresses. Nitrated in effective nodules and particularly in hypoxic conditions; this mechanism may play a protective role in the symbiosis by buffering toxic peroxynitrite NO(2)(-). Nitration level decrease during nodule senescence. In terms of processing, phosphorylation at Ser-45 disrupts the molecular environment of its porphyrin ring oxygen binding pocket, thus leading to a reduced oxygen consumption and to the delivery of oxygen O(2) to symbiosomes. In terms of tissue distribution, root nodules.

The protein localises to the cytoplasm. It is found in the nucleus. In terms of biological role, leghemoglobin that reversibly binds oxygen O(2) through a pentacoordinated heme iron. In root nodules, facilitates the diffusion of oxygen to the bacteroids while preventing the bacterial nitrogenase from being inactivated by buffering dioxygen, nitric oxide and carbon monoxide, and promoting the formation of reactive oxygen species (ROS, e.g. H(2)O(2)). This role is essential for symbiotic nitrogen fixation (SNF). This Medicago truncatula (Barrel medic) protein is Leghemoglobin 8.